Reading from the N-terminus, the 249-residue chain is Hydroxyacylglutathione hydrolase (249 aa).

His54, His56, Asp58, His59, His113, Asp138, and His176 together coordinate Zn(2+).

The protein belongs to the metallo-beta-lactamase superfamily. Glyoxalase II family. Monomer. It depends on Zn(2+) as a cofactor.

The enzyme catalyses an S-(2-hydroxyacyl)glutathione + H2O = a 2-hydroxy carboxylate + glutathione + H(+). Its pathway is secondary metabolite metabolism; methylglyoxal degradation; (R)-lactate from methylglyoxal: step 2/2. Thiolesterase that catalyzes the hydrolysis of S-D-lactoyl-glutathione to form glutathione and D-lactic acid. This Parasynechococcus marenigrum (strain WH8102) protein is Hydroxyacylglutathione hydrolase.